A 275-amino-acid chain; its full sequence is 4-hydroxy-tetrahydrodipicolinate reductase (275 aa).

Position 12–17 (12–17) interacts with NAD(+); that stretch reads GAAGRM. R39 lines the NADP(+) pocket. NAD(+)-binding positions include 102 to 104 and 126 to 129; these read GTT and SGNM. H160 serves as the catalytic Proton donor/acceptor. H161 provides a ligand contact to (S)-2,3,4,5-tetrahydrodipicolinate. K164 (proton donor) is an active-site residue. 170–171 is a (S)-2,3,4,5-tetrahydrodipicolinate binding site; sequence GT.

It belongs to the DapB family.

Its subcellular location is the cytoplasm. It catalyses the reaction (S)-2,3,4,5-tetrahydrodipicolinate + NAD(+) + H2O = (2S,4S)-4-hydroxy-2,3,4,5-tetrahydrodipicolinate + NADH + H(+). It carries out the reaction (S)-2,3,4,5-tetrahydrodipicolinate + NADP(+) + H2O = (2S,4S)-4-hydroxy-2,3,4,5-tetrahydrodipicolinate + NADPH + H(+). The protein operates within amino-acid biosynthesis; L-lysine biosynthesis via DAP pathway; (S)-tetrahydrodipicolinate from L-aspartate: step 4/4. Its function is as follows. Catalyzes the conversion of 4-hydroxy-tetrahydrodipicolinate (HTPA) to tetrahydrodipicolinate. The protein is 4-hydroxy-tetrahydrodipicolinate reductase of Agrobacterium fabrum (strain C58 / ATCC 33970) (Agrobacterium tumefaciens (strain C58)).